The following is a 277-amino-acid chain: Phosphonates import ATP-binding protein PhnC (277 aa).

The region spanning 3–251 (IKLDKVSARH…RLQALYAQHL (249 aa)) is the ABC transporter domain. 40–47 (GPSGAGKT) is a binding site for ATP.

Belongs to the ABC transporter superfamily. Phosphonates importer (TC 3.A.1.9.1) family. The complex is composed of two ATP-binding proteins (PhnC), two transmembrane proteins (PhnE) and a solute-binding protein (PhnD).

The protein localises to the cell inner membrane. It carries out the reaction phosphonate(out) + ATP + H2O = phosphonate(in) + ADP + phosphate + H(+). Its function is as follows. Part of the ABC transporter complex PhnCDE involved in phosphonates import. Responsible for energy coupling to the transport system. This is Phosphonates import ATP-binding protein PhnC from Polaromonas sp. (strain JS666 / ATCC BAA-500).